The following is a 2511-amino-acid chain: Fatty acid synthase (2511 aa).

Met1 carries the N-acetylmethionine modification. Residues 1–406 (MEEVVIAGMS…GSNVHIILRP (406 aa)) enclose the Ketosynthase family 3 (KS3) domain. Residue Ser63 is modified to Phosphoserine. Position 70 is an N6-acetyllysine (Lys70). The active-site For beta-ketoacyl synthase activity is the Cys161. At Ser207 the chain carries Phosphoserine. Catalysis depends on His293, which acts as the For beta-ketoacyl synthase activity. Lys298 carries the post-translational modification N6-acetyllysine. His331 (for beta-ketoacyl synthase activity) is an active-site residue. The acyl and malonyl transferases stretch occupies residues 429-817 (RTPEAVQKLL…IDANPNALFP (389 aa)). Residues Lys436 and Lys528 each carry the N6-acetyllysine modification. The active-site For malonyltransferase activity is Ser581. Residues 647-648 (DT) and Phe671 contribute to the an acyl-CoA site. Lys673 is modified (N6-acetyllysine). Phosphoserine is present on Ser725. Residue Arg773 participates in an acyl-CoA binding. An N-terminal hotdog fold region spans residues 838-966 (HSLAWDVPAA…KVYQWDDPDP (129 aa)). A PKS/mFAS DH domain is found at 838 to 1108 (HSLAWDVPAA…TESAPRRQQE (271 aa)). Residue His878 is the Proton acceptor; for dehydratase activity of the active site. Positions 981–1108 (EPLFLAQAEV…TESAPRRQQE (128 aa)) are C-terminal hotdog fold. Lys992 bears the N6-acetyllysine mark. Asp1031 (proton donor; for dehydratase activity) is an active-site residue. Phosphoserine is present on residues Ser1174 and Ser1411. Cys1471 is modified (S-nitrosocysteine). 2 positions are modified to phosphoserine: Ser1584 and Ser1594. Residues 1635 to 1863 (DVPSNWTLEE…VQVLAEEPEA (229 aa)) form an enoyl reductase region. Residue 1671–1688 (LLIHSGSGGVGQAAIAIA) coordinates NADP(+). Lys1704 carries the post-translational modification N6-(pyridoxal phosphate)lysine; alternate. Residue Lys1704 is modified to N6-acetyllysine; alternate. N6-acetyllysine occurs at positions 1771 and 1847. Residues 1864 to 2118 (VLKGAKPKLM…FVLAEKAAAY (255 aa)) are beta-ketoacyl reductase. 1886–1901 (SYIIAGGLGGFGLELA) is an NADP(+) binding site. Lys1995 is subject to N6-acetyllysine. Cys2091 carries the S-nitrosocysteine modification. In terms of domain architecture, Carrier spans 2121 to 2198 (RDSQRDLVEA…ELSSKADEAS (78 aa)). Residue Ser2156 is modified to O-(pantetheine 4'-phosphoryl)serine; alternate. At Ser2156 the chain carries Phosphoserine; alternate. The residue at position 2198 (Ser2198) is a Phosphoserine. Residues Thr2204 and Thr2215 each carry the phosphothreonine modification. The interval 2207–2511 (EDGLAQQQTQ…AEPRVSVREG (305 aa)) is thioesterase. Ser2236 bears the Phosphoserine mark. Ser2308 (for thioesterase activity) is an active-site residue. Residue Lys2391 is modified to N6-acetyllysine. Lys2449 is covalently cross-linked (Glycyl lysine isopeptide (Lys-Gly) (interchain with G-Cter in SUMO2)). His2481 serves as the catalytic For thioesterase activity.

Homodimer which is arranged in a head to tail fashion. Interacts with CEACAM1; this interaction is insulin and phosphorylation-dependent; reduces fatty-acid synthase activity. In terms of processing, S-nitrosylation of Fatty acid synthase at cysteine residues Cys-1471 or Cys-2091 is important for the enzyme dimerization. In adipocytes, S-nitrosylation of Fatty acid synthase occurs under physiological conditions and gradually increases during adipogenesis. As to expression, ubiquitous. Prominent expression in brain, lung, liver and mammary gland.

Its subcellular location is the cytoplasm. The protein resides in the melanosome. It carries out the reaction acetyl-CoA + n malonyl-CoA + 2n NADPH + 2n H(+) = a long-chain fatty acid + (n+1) CoA + n CO2 + 2n NADP(+).. It catalyses the reaction holo-[ACP] + acetyl-CoA = acetyl-[ACP] + CoA. The catalysed reaction is holo-[ACP] + malonyl-CoA = malonyl-[ACP] + CoA. The enzyme catalyses a fatty acyl-[ACP] + malonyl-[ACP] + H(+) = a 3-oxoacyl-[ACP] + holo-[ACP] + CO2. It carries out the reaction a (3R)-hydroxyacyl-[ACP] + NADP(+) = a 3-oxoacyl-[ACP] + NADPH + H(+). It catalyses the reaction a (3R)-hydroxyacyl-[ACP] = a (2E)-enoyl-[ACP] + H2O. The catalysed reaction is a 2,3-saturated acyl-[ACP] + NADP(+) = a (2E)-enoyl-[ACP] + NADPH + H(+). The enzyme catalyses hexadecanoyl-[ACP] + H2O = hexadecanoate + holo-[ACP] + H(+). It carries out the reaction acetyl-[ACP] + malonyl-[ACP] + H(+) = 3-oxobutanoyl-[ACP] + holo-[ACP] + CO2. It catalyses the reaction 3-oxobutanoyl-[ACP] + NADPH + H(+) = (3R)-hydroxybutanoyl-[ACP] + NADP(+). The catalysed reaction is (3R)-hydroxybutanoyl-[ACP] = (2E)-butenoyl-[ACP] + H2O. The enzyme catalyses (2E)-butenoyl-[ACP] + NADPH + H(+) = butanoyl-[ACP] + NADP(+). It carries out the reaction butanoyl-[ACP] + malonyl-[ACP] + H(+) = 3-oxohexanoyl-[ACP] + holo-[ACP] + CO2. It catalyses the reaction 3-oxohexanoyl-[ACP] + NADPH + H(+) = (3R)-hydroxyhexanoyl-[ACP] + NADP(+). The catalysed reaction is (3R)-hydroxyhexanoyl-[ACP] = (2E)-hexenoyl-[ACP] + H2O. The enzyme catalyses (2E)-hexenoyl-[ACP] + NADPH + H(+) = hexanoyl-[ACP] + NADP(+). It carries out the reaction hexanoyl-[ACP] + malonyl-[ACP] + H(+) = 3-oxooctanoyl-[ACP] + holo-[ACP] + CO2. It catalyses the reaction 3-oxooctanoyl-[ACP] + NADPH + H(+) = (3R)-hydroxyoctanoyl-[ACP] + NADP(+). The catalysed reaction is (3R)-hydroxyoctanoyl-[ACP] = (2E)-octenoyl-[ACP] + H2O. The enzyme catalyses (2E)-octenoyl-[ACP] + NADPH + H(+) = octanoyl-[ACP] + NADP(+). It carries out the reaction octanoyl-[ACP] + malonyl-[ACP] + H(+) = 3-oxodecanoyl-[ACP] + holo-[ACP] + CO2. It catalyses the reaction 3-oxodecanoyl-[ACP] + NADPH + H(+) = (3R)-hydroxydecanoyl-[ACP] + NADP(+). The catalysed reaction is (3R)-hydroxydecanoyl-[ACP] = (2E)-decenoyl-[ACP] + H2O. The enzyme catalyses (2E)-decenoyl-[ACP] + NADPH + H(+) = decanoyl-[ACP] + NADP(+). It carries out the reaction decanoyl-[ACP] + malonyl-[ACP] + H(+) = 3-oxododecanoyl-[ACP] + holo-[ACP] + CO2. It catalyses the reaction 3-oxododecanoyl-[ACP] + NADPH + H(+) = (3R)-hydroxydodecanoyl-[ACP] + NADP(+). The catalysed reaction is (3R)-hydroxydodecanoyl-[ACP] = (2E)-dodecenoyl-[ACP] + H2O. The enzyme catalyses (2E)-dodecenoyl-[ACP] + NADPH + H(+) = dodecanoyl-[ACP] + NADP(+). It carries out the reaction dodecanoyl-[ACP] + malonyl-[ACP] + H(+) = 3-oxotetradecanoyl-[ACP] + holo-[ACP] + CO2. It catalyses the reaction 3-oxotetradecanoyl-[ACP] + NADPH + H(+) = (3R)-hydroxytetradecanoyl-[ACP] + NADP(+). The catalysed reaction is (3R)-hydroxytetradecanoyl-[ACP] = (2E)-tetradecenoyl-[ACP] + H2O. The enzyme catalyses (2E)-tetradecenoyl-[ACP] + NADPH + H(+) = tetradecanoyl-[ACP] + NADP(+). It carries out the reaction tetradecanoyl-[ACP] + malonyl-[ACP] + H(+) = 3-oxohexadecanoyl-[ACP] + holo-[ACP] + CO2. It catalyses the reaction 3-oxohexadecanoyl-[ACP] + NADPH + H(+) = (3R)-hydroxyhexadecanoyl-[ACP] + NADP(+). The catalysed reaction is (3R)-hydroxyhexadecanoyl-[ACP] = (2E)-hexadecenoyl-[ACP] + H2O. The enzyme catalyses (2E)-hexadecenoyl-[ACP] + NADPH + H(+) = hexadecanoyl-[ACP] + NADP(+). It carries out the reaction hexadecanoyl-[ACP] + malonyl-[ACP] + H(+) = 3-oxooctadecanoyl-[ACP] + holo-[ACP] + CO2. It catalyses the reaction 3-oxooctadecanoyl-[ACP] + NADPH + H(+) = (3R)-hydroxyoctadecanoyl-[ACP] + NADP(+). The catalysed reaction is (3R)-hydroxyoctadecanoyl-[ACP] = (2E)-octadecenoyl-[ACP] + H2O. The enzyme catalyses (2E)-octadecenoyl-[ACP] + NADPH + H(+) = octadecanoyl-[ACP] + NADP(+). It carries out the reaction tetradecanoyl-[ACP] + H2O = tetradecanoate + holo-[ACP] + H(+). It catalyses the reaction octadecanoyl-[ACP] + H2O = octadecanoate + holo-[ACP] + H(+). Its pathway is lipid metabolism; fatty acid biosynthesis. With respect to regulation, activated by S-nitrosylation which promotes enzyme dimerization. Cerulenin, a potent non-competitive pharmacological inhibitor of FAS, binds covalently to the active site of the condensing enzyme region, inactivating a key enzyme step in fatty acid synthesis. Functionally, fatty acid synthetase is a multifunctional enzyme that catalyzes the de novo biosynthesis of long-chain saturated fatty acids starting from acetyl-CoA and malonyl-CoA in the presence of NADPH. This multifunctional protein contains 7 catalytic activities and a site for the binding of the prosthetic group 4'-phosphopantetheine of the acyl carrier protein ([ACP]) domain. (Microbial infection) Fatty acid synthetase activity is required for SARS coronavirus-2/SARS-CoV-2 replication. This is Fatty acid synthase (FASN) from Homo sapiens (Human).